A 475-amino-acid chain; its full sequence is Lipoprotein lipase (475 aa).

An N-terminal signal peptide occupies residues 1–27 (MESKALLLLALAVWLQSLTASRGGVAA). The tract at residues 32 to 53 (RDFIDIESKFALRTPEDTAEDT) is interaction with GPIHBP1. An intrachain disulfide couples Cys54 to Cys67. Residue Asn70 is glycosylated (N-linked (GlcNAc...) asparagine). Tyr121 bears the 3'-nitrotyrosine mark. Catalysis depends on Ser159, which acts as the Nucleophile. The active-site Charge relay system is the Asp183. Tyr191 carries the post-translational modification 3'-nitrotyrosine. Residues Ala194, Arg197, Ser199, and Asp202 each contribute to the Ca(2+) site. Cys243 and Cys266 form a disulfide bridge. The essential for determining substrate specificity stretch occupies residues 243-266 (CNIGEAIRVIAERGLGDVDQLVKC). The Charge relay system role is filled by His268. 2 disulfides stabilise this stretch: Cys291/Cys310 and Cys302/Cys305. A PLAT domain is found at 341–464 (FHYQVKIHFS…KGKAPAVFVK (124 aa)). At Tyr343 the chain carries 3'-nitrotyrosine. Residue Asn386 is glycosylated (N-linked (GlcNAc...) asparagine). The segment at 417 to 421 (WSDWW) is important for interaction with lipoprotein particles. The tract at residues 430–434 (KIRVK) is important for heparin binding. Positions 443–467 (IFCSREKVSHLQKGKAPAVFVKCHD) are interaction with GPIHBP1. Cys445 and Cys465 are joined by a disulfide.

The protein belongs to the AB hydrolase superfamily. Lipase family. As to quaternary structure, homodimer. Interacts with GPIHBP1 with 1:1 stoichiometry. Interacts with APOC2; the interaction activates LPL activity in the presence of lipids. Interaction with heparan sulfate proteoglycans is required to protect LPL against loss of activity. Associates with lipoprotein particles in blood plasma. Interacts with LMF1 and SEL1L; interaction with SEL1L is required to prevent aggregation of newly synthesized LPL in the endoplasmic reticulum (ER), and for normal export of LPL from the ER to the extracellular space. Interacts with SORL1; SORL1 acts as a sorting receptor, promoting LPL localization to endosomes and later to lysosomes, leading to degradation of newly synthesized LPL. Post-translationally, tyrosine nitration after lipopolysaccharide (LPS) challenge down-regulates the lipase activity. Highest levels in the spinal cord.

Its subcellular location is the cell membrane. It is found in the secreted. It localises to the extracellular space. The protein resides in the extracellular matrix. It carries out the reaction a triacylglycerol + H2O = a diacylglycerol + a fatty acid + H(+). The enzyme catalyses a 1,2-diacyl-sn-glycero-3-phosphocholine + H2O = a 2-acyl-sn-glycero-3-phosphocholine + a fatty acid + H(+). It catalyses the reaction 1,2,3-tri-(9Z-octadecenoyl)-glycerol + H2O = di-(9Z)-octadecenoylglycerol + (9Z)-octadecenoate + H(+). The catalysed reaction is 1,2-di-(9Z-octadecenoyl)-sn-glycero-3-phosphocholine + H2O = (9Z-octadecenoyl)-sn-glycero-3-phosphocholine + (9Z)-octadecenoate + H(+). It carries out the reaction 1,2,3-tributanoylglycerol + H2O = dibutanoylglycerol + butanoate + H(+). The enzyme catalyses 1,2-dihexadecanoyl-sn-glycero-3-phosphocholine + H2O = hexadecanoyl-sn-glycero-3-phosphocholine + hexadecanoate + H(+). With respect to regulation, the apolipoprotein APOC2 acts as a coactivator of LPL activity. Ca(2+) binding promotes protein stability and formation of the active homodimer. Interaction with GPIHBP1 protects LPL against inactivation by ANGPTL4. Its function is as follows. Key enzyme in triglyceride metabolism. Catalyzes the hydrolysis of triglycerides from circulating chylomicrons and very low density lipoproteins (VLDL), and thereby plays an important role in lipid clearance from the blood stream, lipid utilization and storage. Although it has both phospholipase and triglyceride lipase activities it is primarily a triglyceride lipase with low but detectable phospholipase activity. Mediates margination of triglyceride-rich lipoprotein particles in capillaries. Recruited to its site of action on the luminal surface of vascular endothelium by binding to GPIHBP1 and cell surface heparan sulfate proteoglycans. In Papio anubis (Olive baboon), this protein is Lipoprotein lipase (LPL).